The following is a 227-amino-acid chain: MGQKVHPTGFRLGITQDWKSKWYSEKKKYTQTLHEDIKIRKFIEERYKQAGISSVLIERLGDRMRVKIMAARPGIVIGAKGAEVEKLNEIIKKLTSTKEVIVNVDEVKKPELDAKLVAEDIALQLERRVTHRRAMKKAIDSALKAGAKGIKTQVGGRIGGVDLARKEWFMAGRMPLQTLKADIDYGTARASTKYGILGIKVWIYKGDKLEGKAEEVLSRVEEELHTT.

The KH type-2 domain maps to 39–108 (IRKFIEERYK…EVIVNVDEVK (70 aa)).

Belongs to the universal ribosomal protein uS3 family. As to quaternary structure, part of the 30S ribosomal subunit. Forms a tight complex with proteins S10 and S14.

In terms of biological role, binds the lower part of the 30S subunit head. Binds mRNA in the 70S ribosome, positioning it for translation. This Sulfurihydrogenibium sp. (strain YO3AOP1) protein is Small ribosomal subunit protein uS3.